An 88-amino-acid polypeptide reads, in one-letter code: Large ribosomal subunit protein bL27 (88 aa).

A disordered region spans residues 1–24; that stretch reads MAHKKGTGSTRNGRDSNAKRLGVK.

The protein belongs to the bacterial ribosomal protein bL27 family.

This chain is Large ribosomal subunit protein bL27, found in Synechococcus sp. (strain CC9605).